Reading from the N-terminus, the 317-residue chain is Actin-related protein 2/3 complex subunit 2 (317 aa).

Belongs to the ARPC2 family. Component of the Arp2/3 complex composed of arp2, act2, arc1/p41-ARC, arc2/p34-ARC, arc3/p21-ARC, arc4/p20-ARC and arc5/p16-ARC.

The protein resides in the cytoplasm. The protein localises to the cytoskeleton. It localises to the actin patch. In terms of biological role, functions as actin-binding component of the Arp2/3 complex which is involved in regulation of actin polymerization and together with an activating nucleation-promoting factor (NPF) mediates the formation of branched actin networks. Seems to contact the mother actin filament. This is Actin-related protein 2/3 complex subunit 2 (arc2) from Schizosaccharomyces pombe (strain 972 / ATCC 24843) (Fission yeast).